A 73-amino-acid polypeptide reads, in one-letter code: Disintegrin cerastin (73 aa).

Positions 1-73 constitute a Disintegrin domain; that stretch reads EAGEECDCGT…ADCPRNGLYG (73 aa). 6 disulfide bridges follow: Cys-6–Cys-21, Cys-8–Cys-16, Cys-15–Cys-38, Cys-29–Cys-35, Cys-34–Cys-59, and Cys-47–Cys-66. The Cell attachment site motif lies at 51 to 53; the sequence is RGD.

The protein belongs to the venom metalloproteinase (M12B) family. P-II subfamily. P-IIa sub-subfamily. Monomer (disintegrin). Expressed by the venom gland.

It is found in the secreted. Functionally, inhibits fibrinogen interaction with platelets. Acts by binding to alpha-IIb/beta-3 (ITGA2B/ITGB3) on the platelet surface and inhibits aggregation induced by ADP, thrombin, platelet-activating factor and collagen. This chain is Disintegrin cerastin, found in Crotalus cerastes cerastes (Mojave desert sidewinder).